A 299-amino-acid polypeptide reads, in one-letter code: Oxygen-dependent coproporphyrinogen-III oxidase (299 aa).

Serine 92 provides a ligand contact to substrate. A divalent metal cation-binding residues include histidine 96 and histidine 106. Residue histidine 106 is the Proton donor of the active site. Position 108-110 (108-110) interacts with substrate; that stretch reads NVR. Residues histidine 145 and histidine 175 each contribute to the a divalent metal cation site. Positions 240-275 are important for dimerization; the sequence is YVEFNLVWDRGTLFGLQTGGRTESILMSMPPLVRWE. A substrate-binding site is contributed by 258–260; the sequence is GGR.

It belongs to the aerobic coproporphyrinogen-III oxidase family. In terms of assembly, homodimer. A divalent metal cation serves as cofactor.

It is found in the cytoplasm. It carries out the reaction coproporphyrinogen III + O2 + 2 H(+) = protoporphyrinogen IX + 2 CO2 + 2 H2O. Its pathway is porphyrin-containing compound metabolism; protoporphyrin-IX biosynthesis; protoporphyrinogen-IX from coproporphyrinogen-III (O2 route): step 1/1. Involved in the heme biosynthesis. Catalyzes the aerobic oxidative decarboxylation of propionate groups of rings A and B of coproporphyrinogen-III to yield the vinyl groups in protoporphyrinogen-IX. This is Oxygen-dependent coproporphyrinogen-III oxidase from Shigella dysenteriae serotype 1 (strain Sd197).